We begin with the raw amino-acid sequence, 145 residues long: Enhancer of mRNA-decapping protein 2 (145 aa).

2 disordered regions span residues 1–74 (MGSE…DKAT) and 89–115 (PKKK…IDSK). Over residues 29–42 (TKTQILVPPTQSLP) the composition is skewed to polar residues. The span at 55–73 (QRREPRERTSKTGHEDDKA) shows a compositional bias: basic and acidic residues. Residues 89–102 (PKKKSCKYKKKKTR) are compositionally biased toward basic residues.

The protein belongs to the EDC family.

It is found in the cytoplasm. Its subcellular location is the nucleus. In terms of biological role, mRNA-binding protein which stimulates mRNA decapping by DCP1 and DCP2. This chain is Enhancer of mRNA-decapping protein 2 (EDC2), found in Saccharomyces cerevisiae (strain ATCC 204508 / S288c) (Baker's yeast).